The following is a 226-amino-acid chain: 2,3-bisphosphoglycerate-dependent phosphoglycerate mutase (226 aa).

Substrate is bound by residues 8 to 15 (RHGQSVWN), 21 to 22 (TG), Arg58, 109 to 112 (ERMY), Lys120, 136 to 137 (RR), and 180 to 181 (GN). His9 functions as the Tele-phosphohistidine intermediate in the catalytic mechanism. Glu109 functions as the Proton donor/acceptor in the catalytic mechanism.

The protein belongs to the phosphoglycerate mutase family. BPG-dependent PGAM subfamily.

It catalyses the reaction (2R)-2-phosphoglycerate = (2R)-3-phosphoglycerate. It functions in the pathway carbohydrate degradation; glycolysis; pyruvate from D-glyceraldehyde 3-phosphate: step 3/5. In terms of biological role, catalyzes the interconversion of 2-phosphoglycerate and 3-phosphoglycerate. This is 2,3-bisphosphoglycerate-dependent phosphoglycerate mutase from Chlamydia trachomatis serovar A (strain ATCC VR-571B / DSM 19440 / HAR-13).